A 607-amino-acid polypeptide reads, in one-letter code: Branchpoint-bridging protein (607 aa).

Composition is skewed to polar residues over residues 1–15 and 35–45; these read MSWR…NNIP and VTPSAPSSVTN. 2 disordered regions span residues 1–92 and 134–155; these read MSWR…TENK and VPAD…GRRV. Residues 46–76 show a composition bias toward basic and acidic residues; that stretch reads GDRDRDRDGPVYSNDRDVKRGRSPERSEDGP. The KH domain occupies 201-281; it reads YVPVNDYPEI…EKVNKAKKLI (81 aa). 2 CCHC-type zinc fingers span residues 319–336 and 344–361; these read QACQ…DCPE and IICR…DCPD. 2 disordered regions span residues 363–390 and 407–607; these read QRGA…GGDA and AAPA…PPGA. Gly residues predominate over residues 373-389; that stretch reads PGAGRTAGRIGSSGGGD. Over residues 472–500 the composition is skewed to basic and acidic residues; the sequence is ARDRNERRHDDRDRGDSYYGGDRRHDDYG. The segment covering 521–533 has biased composition (low complexity); sequence SAPAIPTAPAYPG. Gly residues predominate over residues 534–545; that stretch reads AYGGYPGYGAPP. 2 stretches are compositionally biased toward pro residues: residues 550–563 and 581–607; these read APPP…PGAP and APPP…PPGA.

This sequence belongs to the BBP/SF1 family.

It localises to the nucleus. Functionally, necessary for the splicing of pre-mRNA. Has a role in the recognition of the branch site (5'-UACUAAC-3'), the pyrimidine tract and the 3'-splice site at the 3'-end of introns. This chain is Branchpoint-bridging protein (bbp-1), found in Neurospora crassa (strain ATCC 24698 / 74-OR23-1A / CBS 708.71 / DSM 1257 / FGSC 987).